We begin with the raw amino-acid sequence, 641 residues long: Calpain-6 (641 aa).

In terms of domain architecture, Calpain catalytic spans 26–343 (LFCDPTFLPE…FHKLNVCRNV (318 aa)). The domain III stretch occupies residues 344–495 (NNPVFGRKEL…IFSEVPVQLR (152 aa)). Positions 498 to 621 (TLDMPKMSCW…YLRKKGGPTA (124 aa)) constitute a C2 domain.

The protein belongs to the peptidase C2 family. Interacts (via domain III) with microtubules. Interacts (via domain II) with ARHGEF2 (via the N-terminal zinc finger).

Its subcellular location is the cytoplasm. The protein resides in the perinuclear region. The protein localises to the cytoskeleton. It localises to the spindle. Microtubule-stabilizing protein that may be involved in the regulation of microtubule dynamics and cytoskeletal organization. May act as a regulator of RAC1 activity through interaction with ARHGEF2 to control lamellipodial formation and cell mobility. Does not seem to have protease activity as it has lost the active site residues. The polypeptide is Calpain-6 (Capn6) (Rattus norvegicus (Rat)).